The sequence spans 87 residues: Small ribosomal subunit protein bS20 (87 aa).

The tract at residues M1–R22 is disordered.

Belongs to the bacterial ribosomal protein bS20 family.

Functionally, binds directly to 16S ribosomal RNA. The polypeptide is Small ribosomal subunit protein bS20 (Nitratidesulfovibrio vulgaris (strain DP4) (Desulfovibrio vulgaris)).